A 238-amino-acid polypeptide reads, in one-letter code: ATP synthase subunit a (238 aa).

The next 4 helical transmembrane spans lie at 17-37 (LSNI…AIIC), 80-100 (ITLL…QIAI), 112-132 (DPIV…YYGI), and 194-214 (IFVG…SIFI).

It belongs to the ATPase A chain family. As to quaternary structure, F-type ATPases have 2 components, CF(1) - the catalytic core - and CF(0) - the membrane proton channel. CF(1) has five subunits: alpha(3), beta(3), gamma(1), delta(1), epsilon(1). CF(0) has three main subunits: a(1), b(2) and c(9-12). The alpha and beta chains form an alternating ring which encloses part of the gamma chain. CF(1) is attached to CF(0) by a central stalk formed by the gamma and epsilon chains, while a peripheral stalk is formed by the delta and b chains.

The protein resides in the cell membrane. Functionally, key component of the proton channel; it plays a direct role in the translocation of protons across the membrane. This chain is ATP synthase subunit a, found in Listeria welshimeri serovar 6b (strain ATCC 35897 / DSM 20650 / CCUG 15529 / CIP 8149 / NCTC 11857 / SLCC 5334 / V8).